A 134-amino-acid polypeptide reads, in one-letter code: MNRRDLLLQEMGISQWELYRPEVLQGSVGISVAENIRLITVSDENISSSPLLADVLLSLNLKKENCLCLNYDQIQHMECKQPIRYWLLSENSDQIDRTLPFCKQAEQVYRSPSWQQFQSNHQAKRALWQQIQQP.

The protein belongs to the DNA polymerase III psi/HolD chain family. As to quaternary structure, DNA polymerase III contains a core (composed of alpha, epsilon and theta chains) that associates with a tau subunit. This core dimerizes to form the POLIII' complex. PolIII' associates with the gamma complex (composed of gamma, delta, delta', psi and chi chains) and with the beta chain to form the complete DNA polymerase III complex. Interacts directly with the chi subunit (holC).

The enzyme catalyses DNA(n) + a 2'-deoxyribonucleoside 5'-triphosphate = DNA(n+1) + diphosphate. Functionally, part of the beta sliding clamp loading complex, which hydrolyzes ATP to load the beta clamp onto primed DNA to form the DNA replication pre-initiation complex. DNA polymerase III is a complex, multichain enzyme responsible for most of the replicative synthesis in bacteria. This DNA polymerase also exhibits 3' to 5' exonuclease activity. The chain is DNA polymerase III subunit psi (holD) from Haemophilus influenzae (strain ATCC 51907 / DSM 11121 / KW20 / Rd).